A 277-amino-acid chain; its full sequence is MALIKVKPTSPGRRSVVKVVTPELHKGKPYAPLLEKQSKKAGRNNNGHITTRHQGGGHKQHYRIVDFRRNKDGIPAKVERLEYDPNRSAHLALLVYADGERRYIIAPRGVSVGAQLVSGSDAPIRAGNALPLRNIPVGSTIHCIELQPGKGAQVARSAGTSVQLLAREGSYAQLRLRSGEVRRVHVDCKATIGEVGNEEHSLRSIGKAGAVRWRGVRPTVRGVVMNPVDHPHGGGEGKTAAGMNPVSPWGLPTKGYRTRSNKRTDNMRVSRRPANKR.

Disordered stretches follow at residues 35–60 (EKQSKKAGRNNNGHITTRHQGGGHKQ) and 225–277 (MNPV…ANKR). A compositionally biased stretch (polar residues) spans 43 to 53 (RNNNGHITTRH).

It belongs to the universal ribosomal protein uL2 family. As to quaternary structure, part of the 50S ribosomal subunit. Forms a bridge to the 30S subunit in the 70S ribosome.

Functionally, one of the primary rRNA binding proteins. Required for association of the 30S and 50S subunits to form the 70S ribosome, for tRNA binding and peptide bond formation. It has been suggested to have peptidyltransferase activity; this is somewhat controversial. Makes several contacts with the 16S rRNA in the 70S ribosome. The protein is Large ribosomal subunit protein uL2 of Methylobacillus flagellatus (strain ATCC 51484 / DSM 6875 / VKM B-1610 / KT).